Reading from the N-terminus, the 172-residue chain is Arginine repressor (172 aa).

It belongs to the ArgR family.

The protein localises to the cytoplasm. Its pathway is amino-acid biosynthesis; L-arginine biosynthesis [regulation]. Functionally, regulates arginine biosynthesis genes. The protein is Arginine repressor of Bifidobacterium adolescentis (strain ATCC 15703 / DSM 20083 / NCTC 11814 / E194a).